A 1108-amino-acid chain; its full sequence is MEISPADSLSISGAAASEVVSEPSVSSSSSSSSPNQASPNPFSNMDPAVSTATGSRYVDDDEDEEDVCRICRNPGDADNPLRYPCACSGSIKFVHQDCLLQWLNHSNARQCEVCKHPFSFSPVYADNAPSRLPFQEFVVGIAMKACHVLQFFLRLSFVLSVWLLTIPFITFWIWRLAFVRTFGEAQRLFLSHISTTVILTDCLHGFLLSASIVFIFLGATSLRDYFRHLRELGGQEERDDDVDRNGARAARRPAGQANRNLAGEGNGEDAGDQGAAVGQIARRNPENVLARLDIQAARLEAQVEQMFDGLDDADGAEDVPFDELVGMQGPVFHLVENAFTVLASNMIFLGVVIFVPFTLGRIILYHVSWLFAAARGPAVAASLHLTDTGLSLENITLKSALTAVSNLTSEGQGNGLLGQLTEMMKVNGSELNGANNTLSVATDLLKGSTVGASKLSDITTLAVGYMFIVFLVFLYLGIIALIRYAKGEPLTVGRFYGIASIVEAVPSLLRQFLAAMRHLMTMIKVAFLLVIELGVFPLMCGWWLDVCTVRMFGKTMSHRVQFLSISPLASSLVHWVVGIMYMLQISIFVSLLRGVLRPGVLYFLRDPADPNYNPFRDLIDDPVHKHARRVLLSVAVYGSLIVMLVFLPVKLAIRMAPSIFPLDISVSDPFTEIPADMLLFQICIPFIIEHFRLRTTIKSLLRCWFTGVGWALGLTDFLLPRPEDNIGQDNGNGEPGRQNRAQVLQVGGPDRAMAALPVADDPNRSRLRAGNVNTGEEYEDDDEQSDSDRYNFVVRIILLLLVAWVTLLLFNSALIVVPVSLGRALFSAIPILPITHGIKCNDLYAFVIGTYAFWTTISGARYAIEHVKSKRTSVLLNQIWKWCGIVFKSSVLLAIWVFIIPVLIGLLFELLVIVPMRVPVDESPVFLLYQDWALGLIFLKIWTRLVMLDHMLPIVDDSWRAKFERVREDGFSRLQGLWVLREIVFPIVMKLLTALCVPYVLARGVFPMLGYPLVVNSAVYRFAWIGCLSVSLFCFCAKRCHVWFRNLHNSIRDDRYLIGRRLHNFGEAALANQNQNQSSEDAGDGVLIGREGDVDNGLRLRRAIQQEA.

Residues 1–60 (MEISPADSLSISGAAASEVVSEPSVSSSSSSSSPNQASPNPFSNMDPAVSTATGSRYVDD) are disordered. The segment covering 10–44 (SISGAAASEVVSEPSVSSSSSSSSPNQASPNPFSN) has biased composition (low complexity). An RING-CH-type zinc finger spans residues 60–121 (DDEDEEDVCR…EVCKHPFSFS (62 aa)). Zn(2+) is bound by residues Cys-68, Cys-71, Cys-85, Cys-87, His-95, Cys-98, Cys-111, and Cys-114. Transmembrane regions (helical) follow at residues 157–177 (FVLSVWLLTIPFITFWIWRLA) and 197–217 (VILTDCLHGFLLSASIVFIFL). Residues 237-246 (ERDDDVDRNG) show a composition bias toward basic and acidic residues. The disordered stretch occupies residues 237–273 (ERDDDVDRNGARAARRPAGQANRNLAGEGNGEDAGDQ). The stretch at 286 to 308 (ENVLARLDIQAARLEAQVEQMFD) forms a coiled coil. 8 consecutive transmembrane segments (helical) span residues 339–359 (FTVLASNMIFLGVVIFVPFTL), 362–382 (IILYHVSWLFAAARGPAVAAS), 462–482 (AVGYMFIVFLVFLYLGIIALI), 489–509 (PLTVGRFYGIASIVEAVPSLL), 525–545 (VAFLLVIELGVFPLMCGWWLD), 572–592 (LVHWVVGIMYMLQISIFVSLL), 630–650 (VLLSVAVYGSLIVMLVFLPVK), and 669–689 (PFTEIPADMLLFQICIPFIIE). Residues 762-784 (PNRSRLRAGNVNTGEEYEDDDEQ) form a disordered region. 6 helical membrane passes run 796–816 (IILLLLVAWVTLLLFNSALIV), 844–864 (YAFVIGTYAFWTTISGARYAI), 894–914 (AIWVFIIPVLIGLLFELLVIV), 923–943 (SPVFLLYQDWALGLIFLKIWT), 982–1002 (EIVFPIVMKLLTALCVPYVLA), and 1017–1036 (SAVYRFAWIGCLSVSLFCFC).

As to expression, expressed in cotyledons, leaves, roots, stems, inflorescences and siliques. Expression higher at the top than at the base of the stem.

Its subcellular location is the membrane. The enzyme catalyses S-ubiquitinyl-[E2 ubiquitin-conjugating enzyme]-L-cysteine + [acceptor protein]-L-lysine = [E2 ubiquitin-conjugating enzyme]-L-cysteine + N(6)-ubiquitinyl-[acceptor protein]-L-lysine.. Its pathway is protein modification; protein ubiquitination. Its function is as follows. Probable E3 ubiquitin ligase acting as a positive post-transcriptional regulator of 3-hydroxy-3-methylglutaryl-coenzyme A reductase activity. Might be involved in the quality control that degrades misfolded proteins. This chain is Probable E3 ubiquitin ligase SUD1 (SUD1), found in Arabidopsis thaliana (Mouse-ear cress).